The following is a 102-amino-acid chain: Large ribosomal subunit protein bL21 (102 aa).

The span at Arg-79 to Pro-91 shows a compositional bias: basic residues. The segment at Arg-79–Ala-102 is disordered.

This sequence belongs to the bacterial ribosomal protein bL21 family. In terms of assembly, part of the 50S ribosomal subunit. Contacts protein L20.

Functionally, this protein binds to 23S rRNA in the presence of protein L20. This chain is Large ribosomal subunit protein bL21, found in Staphylococcus epidermidis (strain ATCC 35984 / DSM 28319 / BCRC 17069 / CCUG 31568 / BM 3577 / RP62A).